Here is a 481-residue protein sequence, read N- to C-terminus: UDP-glycosyltransferase 88F4 (481 aa).

Residues S288, 357-358 (WA), 375-383 (HCGWNSVLE), and 397-400 (YAEQ) contribute to the UDP-alpha-D-glucose site.

This sequence belongs to the UDP-glycosyltransferase family.

Glycosyltransferase that may possess chalcone and dihydrochalcone 2'-O-glucosyltransferase activity. In Malus domestica (Apple), this protein is UDP-glycosyltransferase 88F4.